A 482-amino-acid polypeptide reads, in one-letter code: 6-phosphogluconate dehydrogenase, decarboxylating (482 aa).

Residues 17-22 (GLAVMG), 40-42 (NRS), 82-84 (VKA), and N110 contribute to the NADP(+) site. Substrate is bound by residues N110 and 136–138 (SGG). The active-site Proton acceptor is the K193. 196–197 (HN) serves as a coordination point for substrate. The Proton donor role is filled by E200. 5 residues coordinate substrate: Y201, K272, R299, R457, and H463.

It belongs to the 6-phosphogluconate dehydrogenase family. Homodimer.

It carries out the reaction 6-phospho-D-gluconate + NADP(+) = D-ribulose 5-phosphate + CO2 + NADPH. The protein operates within carbohydrate degradation; pentose phosphate pathway; D-ribulose 5-phosphate from D-glucose 6-phosphate (oxidative stage): step 3/3. Its function is as follows. Catalyzes the oxidative decarboxylation of 6-phosphogluconate to ribulose 5-phosphate and CO(2), with concomitant reduction of NADP to NADPH. In Synechocystis sp. (strain ATCC 27184 / PCC 6803 / Kazusa), this protein is 6-phosphogluconate dehydrogenase, decarboxylating (gnd).